The sequence spans 471 residues: Pneumolysin (471 aa).

4 beta stranded membrane passes run methionine 158–lysine 171, isoleucine 178–glutamate 187, serine 256–alanine 265, and alanine 273–threonine 285. Residues glutamate 427–arginine 437 carry the Conserved undecapeptide motif. A Cholesterol binding motif is present at residues threonine 459–leucine 460.

Belongs to the cholesterol-dependent cytolysin family. As to quaternary structure, elongated monomers align along their lengths, indicating intersubunit contacts and suggesting the prepore structure. Modeling based on cryo-EM shows a homooligomeric pore complex containing 38-44 subunits; when inserted in the host membrane. The size of isolated pores is detergent-dependent; in amphipol A8-35 homogenous rings form with 42 subunits.

The protein localises to the secreted. It is found in the host cell membrane. With respect to regulation, erythrocytes hemolysis is inhibited by cholesterol. Its function is as follows. A cholesterol-dependent toxin that causes cytolysis by forming pores in cholesterol-containing host membranes. After binding to target membranes, the protein undergoes a major conformation change, leading to its insertion in the host membrane and formation of an oligomeric pore complex. Cholesterol is required for binding to host membranes, membrane insertion and pore formation; cholesterol binding is mediated by a Thr-Leu pair in the C-terminus. Can be reversibly inactivated by oxidation. This is Pneumolysin (ply) from Streptococcus pneumoniae serotype 2 (strain D39 / NCTC 7466).